A 276-amino-acid polypeptide reads, in one-letter code: MSVKKKDLITLQDPEAKYPLPLIEKEQISHNTRRFRFGLPSPDHVLGLPVGNYVHLLAQINNELVIRAYTPVSSDDDQGFVDLIIKIYFKNVHPKYPEGGKMTQYLENMKIGDTILFRGPTGRLFYNEPGTLLIKANKTSEPEKKLVHHLGMIAGGTGITPMLQLIRHITKDTSDETRMSLLFANQTEEDILLRKELEEVATTHHKQFNLWYTLDRPPSDWKYSSGFVSADMIKEHLPPPGEDTLILVCGPPPLIQAAAHPSLEQLSYTKDMIFIY.

Residues 15–127 form the FAD-binding FR-type domain; that stretch reads EAKYPLPLIE…RGPTGRLFYN (113 aa). Lys17 carries the post-translational modification N6-acetyllysine. At Tyr18 the chain carries Phosphotyrosine. FAD is bound by residues 107–137 and 146–181; these read ENMK…IKAN and LVHH…RMSL.

It belongs to the flavoprotein pyridine nucleotide cytochrome reductase family. Requires FAD as cofactor.

It carries out the reaction 2 Fe(III)-[cytochrome b5] + NADH = 2 Fe(II)-[cytochrome b5] + NAD(+) + H(+). Its function is as follows. NADH-cytochrome b5 reductases are involved in desaturation and elongation of fatty acids, cholesterol biosynthesis, drug metabolism, and, in erythrocyte, methemoglobin reduction. Responsible for NADH-dependent lucigenin chemiluminescence in spermatozoa by reducing both lucigenin and 2-[4-iodophenyl]-3-[4-nitrophenyl]-5-[2,4-disulfophenyl]-2H tetrazolium monosodium salt (WST-1). The protein is NADH-cytochrome b5 reductase 2 (Cyb5r2) of Mus musculus (Mouse).